Here is a 640-residue protein sequence, read N- to C-terminus: Chaperone protein HtpG (640 aa).

The segment at 1-352 (MTEQTATQNY…SADLPLNVSR (352 aa)) is a; substrate-binding. A b region spans residues 353-571 (ELLQESRDVK…DGELSPQLIR (219 aa)). The c stretch occupies residues 572–640 (MLKQAGQAVP…VKRINSLLLK (69 aa)).

This sequence belongs to the heat shock protein 90 family. As to quaternary structure, homodimer.

It is found in the cytoplasm. In terms of biological role, molecular chaperone. Has ATPase activity. This chain is Chaperone protein HtpG, found in Acinetobacter baylyi (strain ATCC 33305 / BD413 / ADP1).